The following is a 351-amino-acid chain: Cysteine-rich receptor-like protein kinase 45 (351 aa).

The 251-residue stretch at 37–287 (NDFSELVGRG…EILRYIHIAL (251 aa)) folds into the Protein kinase domain. Residues 43–51 (VGRGGFGFV) and K65 each bind ATP. A Phosphotyrosine modification is found at Y110. The Proton acceptor role is filled by D162. 2 positions are modified to phosphothreonine: T197 and T202. Position 210 is a phosphotyrosine (Y210).

It belongs to the protein kinase superfamily. Ser/Thr protein kinase family. CRK subfamily. In terms of assembly, interacts with CRK36. In terms of processing, autophosphorylated and phosphorylated by CRK36.

It localises to the cytoplasm. It is found in the cytosol. The enzyme catalyses L-seryl-[protein] + ATP = O-phospho-L-seryl-[protein] + ADP + H(+). It catalyses the reaction L-threonyl-[protein] + ATP = O-phospho-L-threonyl-[protein] + ADP + H(+). Its function is as follows. Forms a complex with CRK36 that may negatively control abscisic acid (ABA) and osmotic stress signal transduction. Involved in plant response to ABA during seed germination, early seedling growth and responses to abiotic stresses by inducing the expression of ABA-responsive genes and stress-inducible genes. Acts as a positive regulator in disease resistance, downstream of NPR1 and WRKY70. This Arabidopsis thaliana (Mouse-ear cress) protein is Cysteine-rich receptor-like protein kinase 45.